The chain runs to 182 residues: Putative manganese efflux pump MntP (182 aa).

5 helical membrane-spanning segments follow: residues 3–23 (ILLL…SNGA), 42–62 (FFQG…VGFI), 65–85 (IDHF…IFDS), 126–146 (IWFS…AATF), and 161–181 (ILGG…HLGI).

It belongs to the MntP (TC 9.B.29) family.

The protein resides in the cell inner membrane. Probably functions as a manganese efflux pump. The protein is Putative manganese efflux pump MntP of Campylobacter hominis (strain ATCC BAA-381 / DSM 21671 / CCUG 45161 / LMG 19568 / NCTC 13146 / CH001A).